The sequence spans 663 residues: UvrABC system protein B (663 aa).

Over residues 1-10 (MIDKRDDKPF) the composition is skewed to basic and acidic residues. Residues 1 to 23 (MIDKRDDKPFKLKSKYKPSGDQP) are disordered. The region spanning 31 to 418 (DNIEGGEKAQ…TNTIIEQIIR (388 aa)) is the Helicase ATP-binding domain. An ATP-binding site is contributed by 44–51 (GATGTGKT). The Beta-hairpin signature appears at 97–120 (YYDYYQPEAYVPSSDTYIEKDSSV). One can recognise a Helicase C-terminal domain in the interval 435–601 (QMDDLLGEIN…TIKKDIRGLI (167 aa)). The UVR domain occupies 627-662 (KEAINALQKQMQEAAELLDFELAAQMRDLILELKLM).

Belongs to the UvrB family. In terms of assembly, forms a heterotetramer with UvrA during the search for lesions. Interacts with UvrC in an incision complex.

It localises to the cytoplasm. Its function is as follows. The UvrABC repair system catalyzes the recognition and processing of DNA lesions. A damage recognition complex composed of 2 UvrA and 2 UvrB subunits scans DNA for abnormalities. Upon binding of the UvrA(2)B(2) complex to a putative damaged site, the DNA wraps around one UvrB monomer. DNA wrap is dependent on ATP binding by UvrB and probably causes local melting of the DNA helix, facilitating insertion of UvrB beta-hairpin between the DNA strands. Then UvrB probes one DNA strand for the presence of a lesion. If a lesion is found the UvrA subunits dissociate and the UvrB-DNA preincision complex is formed. This complex is subsequently bound by UvrC and the second UvrB is released. If no lesion is found, the DNA wraps around the other UvrB subunit that will check the other stand for damage. In Streptococcus pyogenes serotype M6 (strain ATCC BAA-946 / MGAS10394), this protein is UvrABC system protein B.